A 219-amino-acid polypeptide reads, in one-letter code: Guanylate kinase (219 aa).

In terms of domain architecture, Guanylate kinase-like spans 15–194 (GLMLVISSPS…AFSSVRAIVE (180 aa)). 22–29 (SPSGAGKS) provides a ligand contact to ATP.

The protein belongs to the guanylate kinase family.

The protein localises to the cytoplasm. It catalyses the reaction GMP + ATP = GDP + ADP. Its function is as follows. Essential for recycling GMP and indirectly, cGMP. The chain is Guanylate kinase from Rhizobium meliloti (strain 1021) (Ensifer meliloti).